Reading from the N-terminus, the 279-residue chain is MSAIIELKKVTFNYHKDQEKPTLDGVSFHVKQGEWLSIIGHNGSGKSTTIRLIDGLLEPESGSIIVDGDLLTITNVWEIRHKIGMVFQNPDNQFVGATVEDDVAFGLENKGIAHEDIKERVNHALELVGMQNFKEKEPARLSGGQKQRVAIAGAVAMKPKIIILDEATSMLDPKGRLELIKTIKNIRDDYQLTVISITHDLDEVALSDRVLVMKDGQVESTSTPEQLFARGDELLQLGLDIPFTTSVVQMLQEEGYPVDYGYLTEKELENQLCQLISKM.

In terms of domain architecture, ABC transporter spans 5 to 240 (IELKKVTFNY…GDELLQLGLD (236 aa)). 40–47 (GHNGSGKS) contributes to the ATP binding site.

The protein belongs to the ABC transporter superfamily. Energy-coupling factor EcfA family. As to quaternary structure, forms a stable energy-coupling factor (ECF) transporter complex composed of 2 membrane-embedded substrate-binding proteins (S component), 2 ATP-binding proteins (A component) and 2 transmembrane proteins (T component).

The protein resides in the cell membrane. In terms of biological role, ATP-binding (A) component of a common energy-coupling factor (ECF) ABC-transporter complex. Unlike classic ABC transporters this ECF transporter provides the energy necessary to transport a number of different substrates. In Streptococcus pyogenes serotype M28 (strain MGAS6180), this protein is Energy-coupling factor transporter ATP-binding protein EcfA1.